The primary structure comprises 843 residues: Glycogen phosphorylase, muscle form (843 aa).

S2 carries the post-translational modification N-acetylserine. Residue S15 is modified to Phosphoserine; by PHK; in form phosphorylase A. AMP is bound by residues D43 and Y76. Phosphotyrosine occurs at positions 204 and 227. AMP is bound at residue 310–319; the sequence is RRFKSSKFGC. At S430 the chain carries Phosphoserine. Y473 carries the phosphotyrosine modification. S514 carries the post-translational modification Phosphoserine. K681 carries the post-translational modification N6-(pyridoxal phosphate)lysine. Phosphoserine is present on residues S747 and S748.

The protein belongs to the glycogen phosphorylase family. In terms of assembly, homodimer. Homotetramer; to form the enzymatically active phosphorylase A. The cofactor is pyridoxal 5'-phosphate. Post-translationally, phosphorylation of Ser-15 converts phosphorylase B (unphosphorylated) to phosphorylase A.

The catalysed reaction is [(1-&gt;4)-alpha-D-glucosyl](n) + phosphate = [(1-&gt;4)-alpha-D-glucosyl](n-1) + alpha-D-glucose 1-phosphate. Its activity is regulated as follows. Allosterically regulated through the non-covalent binding of metabolites, being activated by AMP and inhibited by ATP, ADP, and glucose-6-phosphate. The activity is also controlled by post-translational modifications including phosphorylation. Its function is as follows. Allosteric enzyme that catalyzes the rate-limiting step in glycogen catabolism, the phosphorolytic cleavage of glycogen to produce glucose-1-phosphate, and plays a central role in maintaining cellular and organismal glucose homeostasis. This Oryctolagus cuniculus (Rabbit) protein is Glycogen phosphorylase, muscle form.